The chain runs to 946 residues: DNA primase (946 aa).

The disordered stretch occupies residues 596–626; sequence RDTEEDEDGKEDKNNVPGNGVFQKTTSSVDT. Polar residues predominate over residues 617-626; it reads FQKTTSSVDT. Residues 881-920 form a CHC2-type zinc finger; sequence CLNYTHRNPQETVQVFIDLRTEHSYALWASLWSRCFTKKC.

The protein belongs to the herpesviridae DNA primase family. As to quaternary structure, associates with the helicase and the primase-associated factor to form the helicase-primase factor.

The protein localises to the host nucleus. Functionally, essential component of the helicase/primase complex. Unwinds the DNA at the replication forks and generates single-stranded DNA for both leading and lagging strand synthesis. The primase initiates primer synthesis and thereby produces large amount of short RNA primers on the lagging strand that the polymerase elongates using dNTPs. The polypeptide is DNA primase (UL70) (Human cytomegalovirus (strain Merlin) (HHV-5)).